The chain runs to 427 residues: Glutamate-1-semialdehyde 2,1-aminomutase (427 aa).

Lys268 bears the N6-(pyridoxal phosphate)lysine mark.

This sequence belongs to the class-III pyridoxal-phosphate-dependent aminotransferase family. HemL subfamily. It depends on pyridoxal 5'-phosphate as a cofactor.

The protein resides in the cytoplasm. The enzyme catalyses (S)-4-amino-5-oxopentanoate = 5-aminolevulinate. It functions in the pathway porphyrin-containing compound metabolism; protoporphyrin-IX biosynthesis; 5-aminolevulinate from L-glutamyl-tRNA(Glu): step 2/2. This is Glutamate-1-semialdehyde 2,1-aminomutase from Methanococcus maripaludis (strain C6 / ATCC BAA-1332).